We begin with the raw amino-acid sequence, 400 residues long: MSKNRRLFTSESVTEGHPDKICDQISDSILDEILKNDPNARVACETSVTTGLVLVSGEITTSTYVDIPKTVRETIKEIGYTRAKYGFDAETCAVLTSIDEQSADIAMGVDQALEAREGTMSDAEIEAIGAGDQGLMFGYACNETKELMPLPISLAHKLARRLSEVRKEDILPYLRPDGKTQVTVEYDENNKPVRIDAIVISTQHHPEITLEQIQRNLKEHVINPVVPEELIDEETKYFINPTGRFVIGGPQGDAGLTGRKIIVDTYGGYARHGGGAFSGKDATKVDRSAAYAARYVAKNIVAAGLADSCEVQLAYAIGVAQPVSISINTFDTGKASEEKLIEVVRNNFDLRPAGIIKMLDLRRPIYKQTAAYGHFGRHDVDLPWERTDKADALRKEALGE.

Histidine 17 provides a ligand contact to ATP. Residue aspartate 19 coordinates Mg(2+). K(+) is bound at residue glutamate 45. 2 residues coordinate L-methionine: glutamate 58 and glutamine 101. Positions glutamine 101 to glutamine 111 are flexible loop. ATP-binding positions include aspartate 177–lysine 179, arginine 244–phenylalanine 245, aspartate 253, arginine 259–lysine 260, alanine 276, and lysine 280. Aspartate 253 is an L-methionine binding site. Residue lysine 284 participates in L-methionine binding.

It belongs to the AdoMet synthase family. As to quaternary structure, homotetramer; dimer of dimers. Requires Mg(2+) as cofactor. K(+) serves as cofactor.

It is found in the cytoplasm. It catalyses the reaction L-methionine + ATP + H2O = S-adenosyl-L-methionine + phosphate + diphosphate. It participates in amino-acid biosynthesis; S-adenosyl-L-methionine biosynthesis; S-adenosyl-L-methionine from L-methionine: step 1/1. Its function is as follows. Catalyzes the formation of S-adenosylmethionine (AdoMet) from methionine and ATP. The overall synthetic reaction is composed of two sequential steps, AdoMet formation and the subsequent tripolyphosphate hydrolysis which occurs prior to release of AdoMet from the enzyme. The polypeptide is S-adenosylmethionine synthase (Bacillus velezensis (strain DSM 23117 / BGSC 10A6 / LMG 26770 / FZB42) (Bacillus amyloliquefaciens subsp. plantarum)).